We begin with the raw amino-acid sequence, 618 residues long: UvrABC system protein C (618 aa).

The 79-residue stretch at 15–93 (RTPGVYLMKD…IKEHHPRYNI (79 aa)) folds into the GIY-YIG domain. Residues 203–238 (NNLLRELRERMKMAAEQMNYEEAAFLRDRIRAIEET) enclose the UVR domain.

Belongs to the UvrC family. Interacts with UvrB in an incision complex.

The protein resides in the cytoplasm. Functionally, the UvrABC repair system catalyzes the recognition and processing of DNA lesions. UvrC both incises the 5' and 3' sides of the lesion. The N-terminal half is responsible for the 3' incision and the C-terminal half is responsible for the 5' incision. The protein is UvrABC system protein C of Syntrophus aciditrophicus (strain SB).